The primary structure comprises 150 residues: SsrA-binding protein (150 aa).

This sequence belongs to the SmpB family.

It is found in the cytoplasm. Required for rescue of stalled ribosomes mediated by trans-translation. Binds to transfer-messenger RNA (tmRNA), required for stable association of tmRNA with ribosomes. tmRNA and SmpB together mimic tRNA shape, replacing the anticodon stem-loop with SmpB. tmRNA is encoded by the ssrA gene; the 2 termini fold to resemble tRNA(Ala) and it encodes a 'tag peptide', a short internal open reading frame. During trans-translation Ala-aminoacylated tmRNA acts like a tRNA, entering the A-site of stalled ribosomes, displacing the stalled mRNA. The ribosome then switches to translate the ORF on the tmRNA; the nascent peptide is terminated with the 'tag peptide' encoded by the tmRNA and targeted for degradation. The ribosome is freed to recommence translation, which seems to be the essential function of trans-translation. In Rubrobacter xylanophilus (strain DSM 9941 / JCM 11954 / NBRC 16129 / PRD-1), this protein is SsrA-binding protein.